The chain runs to 1463 residues: MGARNSVLRGKKADELEKIRLRPGGKKKYRLKHIVWAANELDRFGLAESLLESKEGCQKILTVLDPLVPTGSENLKSLFNTVCVIWCIHAEEKAKDTEEAKQKVQRHLVAETKTTEKMPSTSRPTAPPSGNGGNFPVQQVAGNYTHVPLSPRTLNAWVKLVEEKKFGAEVVPGFQALSEGCTPYDINQMLNCVGDHQAAMQIIREIINEEAADWDAQHPIPGPLPAGQLREPRGSDIAGTTSTVEEQIQWMFRPQNPVPVGSIYRRWIQIGLQKCVRMYNPTNILDIKQGPKEPFQSYVDRFYKSLRAEQTDPAVKNWMTQTLLVQNANPDCKLVLKGLGINPTLEEMLTACQGVGGPGQKARLMAEALKEAMAPAPIPFAAAQQRRTIKCWNCGKEGHSARQCRAPRRQGCWKCGKAGHIMAKCPERQAGFLRVGPMGKEAPQFPCGPNPAGADTNSTPDRPSRGPTREVHAAREKAERAEREAIQRSDRGLPAARETRDTMQRDDRGLAAPQFSLWKRPVVTAHVEGQPVEVLLDTGADDSIVAGVELGSNYSPKIVGGIGGFINTKEYKNVEIRVLNKRVRATIMTGDTPINIFGRNILTALGMSLNLPVAKIEPIKIMLKPGKDGPKLRQWPLTKEKIEALKEICEKMEREGQLEEAPPTNPYNTPTFAIKKKDKNKWRMLIDFRELNKVTQDFTEIQLGIPHPAGLAKKKRITVLDVGDAYFSIPLHEDFRQYTAFTLPSINNAEPGKRYIYKVSPQGWKGSPAIFQYTMRQVLEPFRKANPDIILIQYMDDILIASDRTDLEHDRVVLQLKELLNGLGFSTPDEKFQKDPPYQWMGYELWPTKWKLQRIQLPQKEVWTVNDIQKLVGVLNWAAQIYPGIKTRNLCRLIRGKMTLTEEVQWTELAEAELEENKIILSQEQEGCYYQEEKELEATVQKDQDNQWTYKIHQGGKILKVGKYAKVKNTHTNGVRLLAQVVQKIGKEALVIWGRIPKFHLPVERDTWEQWWDNYWQVTWIPDWDFISTPPLVRLVFNLVKDPILGAETFYTDGSCNKQSREGKAGYITDRGRDKVRLLEQTTNQQAELEAFAMAVTDSGPKANIIVDSQYVMGIVAGQPTESESKIVNQIIEEMIKKEAIYVAWVPAHKGIGGNQEVDHLVSQGIRQVLFLEKIEPAQEEHEKYHSNVKELSHKFGLPKLVARQIVNTCTQCQQKGEAIHGQVNAELGTWQMDCTHLEGKIIIVAVHVASGFIEAEVIPQESGRQTALFLLKLASRWPITHLHTDNGANFTSQEVKMVAWWIGIEQSFGVPYNPQSQGVVEAMNHHLKNQISRIREQANTVETIVLMAVHCMNFKRRGGIGDMTPAERLINMVTAEQEIQFLQAKNSKLQNFRVYFREGRDQLWKGPGELLWKGDGAVIVKVGADIKIIPRRKAKIIKDYGGRQEMDSGSNLEGAREDGEVA.

Gly2 carries the N-myristoyl glycine; by host lipid modification. The tract at residues 7 to 31 (VLRGKKADELEKIRLRPGGKKKYRL) is interaction with Gp41. Positions 16-22 (LEKIRLR) match the Nuclear export signal motif. The Nuclear localization signal signature appears at 26–32 (KKKYRLK). The interval 112 to 138 (TKTTEKMPSTSRPTAPPSGNGGNFPVQ) is disordered. The interval 191-228 (NCVGDHQAAMQIIREIINEEAADWDAQHPIPGPLPAGQ) is interaction with human PPIA/CYPA and NUP153. Residues 279–365 (YNPTNILDIK…GGPGQKARLM (87 aa)) are dimerization/Multimerization of capsid protein p24. 2 CCHC-type zinc fingers span residues 389–406 (IKCW…QCRA) and 410–427 (QGCW…KCPE). Positions 441 to 508 (EAPQFPCGPN…TRDTMQRDDR (68 aa)) are disordered. Over residues 462–508 (RPSRGPTREVHAAREKAERAEREAIQRSDRGLPAARETRDTMQRDDR) the composition is skewed to basic and acidic residues. Positions 513–517 (PQFSL) are dimerization of protease. The 70-residue stretch at 532-601 (VEVLLDTGAD…TPINIFGRNI (70 aa)) folds into the Peptidase A2 domain. Asp537 acts as the For protease activity; shared with dimeric partner in catalysis. 2 dimerization of protease regions span residues 561 to 567 (GIGGFIN) and 600 to 612 (NILT…LNLP). The Reverse transcriptase domain maps to 655-845 (EGQLEEAPPT…PPYQWMGYEL (191 aa)). The Mg(2+) site is built by Asp721, Asp796, and Asp797. Positions 838–846 (YQWMGYELW) are RT 'primer grip'. The short motif at 1008 to 1024 (WEQWWDNYWQVTWIPDW) is the Tryptophan repeat motif element. The RNase H type-1 domain maps to 1044 to 1167 (ILGAETFYTD…VDHLVSQGIR (124 aa)). Mg(2+)-binding residues include Asp1053, Glu1088, Asp1108, and Asp1159. An Integrase-type zinc finger spans residues 1173-1214 (EKIEPAQEEHEKYHSNVKELSHKFGLPKLVARQIVNTCTQCQ). Residues His1182, His1186, Cys1210, and Cys1213 each coordinate Zn(2+). An Integrase catalytic domain is found at 1223 to 1374 (QVNAELGTWQ…TPAERLINMV (152 aa)). Residues Asp1234, Asp1286, and Glu1322 each contribute to the Mg(2+) site. The segment at residues 1393–1440 (FRVYFREGRDQLWKGPGELLWKGDGAVIVKVGADIKIIPRRKAKIIKD) is a DNA-binding region (integrase-type).

As to quaternary structure, homotrimer; further assembles as hexamers of trimers. Interacts with gp41 (via C-terminus). Interacts with host CALM1; this interaction induces a conformational change in the Matrix protein, triggering exposure of the myristate group. Interacts with host AP3D1; this interaction allows the polyprotein trafficking to multivesicular bodies during virus assembly. Part of the pre-integration complex (PIC) which is composed of viral genome, matrix protein, Vpr and integrase. In terms of assembly, homodimer; the homodimer further multimerizes as homohexamers or homopentamers. Interacts with human PPIA/CYPA. Interacts with human NUP153. Interacts with host PDZD8; this interaction stabilizes the capsid. Interacts with monkey TRIM5; this interaction destabilizes the capsid. Homodimer, whose active site consists of two apposed aspartic acid residues. As to quaternary structure, heterodimer of p66 RT and p51 RT (RT p66/p51). Heterodimerization of RT is essential for DNA polymerase activity. The overall folding of the subdomains is similar in p66 RT and p51 RT but the spatial arrangements of the subdomains are dramatically different. In terms of assembly, homotetramer; may further associate as a homohexadecamer. Part of the pre-integration complex (PIC) which is composed of viral genome, matrix protein, Vpr and integrase. Interacts with human SMARCB1/INI1 and human PSIP1/LEDGF isoform 1. Interacts with human KPNA3; this interaction might play a role in nuclear import of the pre-integration complex. Interacts with human NUP153; this interaction might play a role in nuclear import of the pre-integration complex. Mg(2+) is required as a cofactor. Specific enzymatic cleavages by the viral protease yield mature proteins. The protease is released by autocatalytic cleavage. The polyprotein is cleaved during and after budding, this process is termed maturation. Proteolytic cleavage of p66 RT removes the RNase H domain to yield the p51 RT subunit. Nucleocapsid protein p7 might be further cleaved after virus entry.

Its subcellular location is the host cell membrane. It localises to the host endosome. The protein localises to the host multivesicular body. The protein resides in the virion membrane. It is found in the host nucleus. Its subcellular location is the host cytoplasm. It localises to the virion. It catalyses the reaction Endopeptidase for which the P1 residue is preferably hydrophobic.. The catalysed reaction is Endohydrolysis of RNA in RNA/DNA hybrids. Three different cleavage modes: 1. sequence-specific internal cleavage of RNA. Human immunodeficiency virus type 1 and Moloney murine leukemia virus enzymes prefer to cleave the RNA strand one nucleotide away from the RNA-DNA junction. 2. RNA 5'-end directed cleavage 13-19 nucleotides from the RNA end. 3. DNA 3'-end directed cleavage 15-20 nucleotides away from the primer terminus.. The enzyme catalyses 3'-end directed exonucleolytic cleavage of viral RNA-DNA hybrid.. It carries out the reaction DNA(n) + a 2'-deoxyribonucleoside 5'-triphosphate = DNA(n+1) + diphosphate. Protease: The viral protease is inhibited by many synthetic protease inhibitors (PIs), such as amprenavir, atazanavir, indinavir, loprinavir, nelfinavir, ritonavir and saquinavir. Use of protease inhibitors in tritherapy regimens permit more ambitious therapeutic strategies. Reverse transcriptase/ribonuclease H: RT can be inhibited either by nucleoside RT inhibitors (NRTIs) or by non nucleoside RT inhibitors (NNRTIs). NRTIs act as chain terminators, whereas NNRTIs inhibit DNA polymerization by binding a small hydrophobic pocket near the RT active site and inducing an allosteric change in this region. Classical NRTIs are abacavir, adefovir (PMEA), didanosine (ddI), lamivudine (3TC), stavudine (d4T), tenofovir (PMPA), zalcitabine (ddC), and zidovudine (AZT). Classical NNRTIs are atevirdine (BHAP U-87201E), delavirdine, efavirenz (DMP-266), emivirine (I-EBU), and nevirapine (BI-RG-587). The tritherapies used as a basic effective treatment of AIDS associate two NRTIs and one NNRTI. Its function is as follows. Mediates, with Gag polyprotein, the essential events in virion assembly, including binding the plasma membrane, making the protein-protein interactions necessary to create spherical particles, recruiting the viral Env proteins, and packaging the genomic RNA via direct interactions with the RNA packaging sequence (Psi). Gag-Pol polyprotein may regulate its own translation, by the binding genomic RNA in the 5'-UTR. At low concentration, the polyprotein would promote translation, whereas at high concentration, the polyprotein would encapsidate genomic RNA and then shut off translation. Targets the polyprotein to the plasma membrane via a multipartite membrane-binding signal, that includes its myristoylated N-terminus. Matrix protein is part of the pre-integration complex. Implicated in the release from host cell mediated by Vpu. Binds to RNA. In terms of biological role, forms the conical core that encapsulates the genomic RNA-nucleocapsid complex in the virion. Most core are conical, with only 7% tubular. The core is constituted by capsid protein hexamer subunits. The core is disassembled soon after virion entry. Host restriction factors such as TRIM5-alpha or TRIMCyp bind retroviral capsids and cause premature capsid disassembly, leading to blocks in reverse transcription. Capsid restriction by TRIM5 is one of the factors which restricts HIV-1 to the human species. Host PIN1 apparently facilitates the virion uncoating. On the other hand, interactions with PDZD8 or CYPA stabilize the capsid. Functionally, encapsulates and protects viral dimeric unspliced genomic RNA (gRNA). Binds these RNAs through its zinc fingers. Acts as a nucleic acid chaperone which is involved in rearangement of nucleic acid secondary structure during gRNA retrotranscription. Also facilitates template switch leading to recombination. As part of the polyprotein, participates in gRNA dimerization, packaging, tRNA incorporation and virion assembly. Its function is as follows. Aspartyl protease that mediates proteolytic cleavages of Gag and Gag-Pol polyproteins during or shortly after the release of the virion from the plasma membrane. Cleavages take place as an ordered, step-wise cascade to yield mature proteins. This process is called maturation. Displays maximal activity during the budding process just prior to particle release from the cell. Also cleaves Nef and Vif, probably concomitantly with viral structural proteins on maturation of virus particles. Hydrolyzes host EIF4GI and PABP1 in order to shut off the capped cellular mRNA translation. The resulting inhibition of cellular protein synthesis serves to ensure maximal viral gene expression and to evade host immune response. Multifunctional enzyme that converts the viral RNA genome into dsDNA in the cytoplasm, shortly after virus entry into the cell. This enzyme displays a DNA polymerase activity that can copy either DNA or RNA templates, and a ribonuclease H (RNase H) activity that cleaves the RNA strand of RNA-DNA heteroduplexes in a partially processive 3' to 5' endonucleasic mode. Conversion of viral genomic RNA into dsDNA requires many steps. A tRNA(3)-Lys binds to the primer-binding site (PBS) situated at the 5'-end of the viral RNA. RT uses the 3' end of the tRNA primer to perform a short round of RNA-dependent minus-strand DNA synthesis. The reading proceeds through the U5 region and ends after the repeated (R) region which is present at both ends of viral RNA. The portion of the RNA-DNA heteroduplex is digested by the RNase H, resulting in a ssDNA product attached to the tRNA primer. This ssDNA/tRNA hybridizes with the identical R region situated at the 3' end of viral RNA. This template exchange, known as minus-strand DNA strong stop transfer, can be either intra- or intermolecular. RT uses the 3' end of this newly synthesized short ssDNA to perform the RNA-dependent minus-strand DNA synthesis of the whole template. RNase H digests the RNA template except for two polypurine tracts (PPTs) situated at the 5'-end and near the center of the genome. It is not clear if both polymerase and RNase H activities are simultaneous. RNase H probably can proceed both in a polymerase-dependent (RNA cut into small fragments by the same RT performing DNA synthesis) and a polymerase-independent mode (cleavage of remaining RNA fragments by free RTs). Secondly, RT performs DNA-directed plus-strand DNA synthesis using the PPTs that have not been removed by RNase H as primers. PPTs and tRNA primers are then removed by RNase H. The 3' and 5' ssDNA PBS regions hybridize to form a circular dsDNA intermediate. Strand displacement synthesis by RT to the PBS and PPT ends produces a blunt ended, linear dsDNA copy of the viral genome that includes long terminal repeats (LTRs) at both ends. In terms of biological role, catalyzes viral DNA integration into the host chromosome, by performing a series of DNA cutting and joining reactions. This enzyme activity takes place after virion entry into a cell and reverse transcription of the RNA genome in dsDNA. The first step in the integration process is 3' processing. This step requires a complex comprising the viral genome, matrix protein, Vpr and integrase. This complex is called the pre-integration complex (PIC). The integrase protein removes 2 nucleotides from each 3' end of the viral DNA, leaving recessed CA OH's at the 3' ends. In the second step, the PIC enters cell nucleus. This process is mediated through integrase and Vpr proteins, and allows the virus to infect a non dividing cell. This ability to enter the nucleus is specific of lentiviruses, other retroviruses cannot and rely on cell division to access cell chromosomes. In the third step, termed strand transfer, the integrase protein joins the previously processed 3' ends to the 5' ends of strands of target cellular DNA at the site of integration. The 5'-ends are produced by integrase-catalyzed staggered cuts, 5 bp apart. A Y-shaped, gapped, recombination intermediate results, with the 5'-ends of the viral DNA strands and the 3' ends of target DNA strands remaining unjoined, flanking a gap of 5 bp. The last step is viral DNA integration into host chromosome. This involves host DNA repair synthesis in which the 5 bp gaps between the unjoined strands are filled in and then ligated. Since this process occurs at both cuts flanking the HIV genome, a 5 bp duplication of host DNA is produced at the ends of HIV-1 integration. Alternatively, Integrase may catalyze the excision of viral DNA just after strand transfer, this is termed disintegration. This Human immunodeficiency virus type 2 subtype A (isolate ST) (HIV-2) protein is Gag-Pol polyprotein (gag-pol).